A 186-amino-acid chain; its full sequence is Adenylate kinase (186 aa).

11–16 (GAGKGT) contacts ATP. The tract at residues 31–60 (STGDILRAAVKNGTAMGIEAKKYMDAGDLV) is NMP. AMP-binding positions include T32, R37, 58-60 (DLV), 86-89 (GFPR), and Q93. The segment at 127 to 137 (GRAIKEGRSDD) is LID. R128 provides a ligand contact to ATP. 2 residues coordinate AMP: R134 and R145. G173 is a binding site for ATP.

Belongs to the adenylate kinase family. Monomer.

Its subcellular location is the cytoplasm. It catalyses the reaction AMP + ATP = 2 ADP. It functions in the pathway purine metabolism; AMP biosynthesis via salvage pathway; AMP from ADP: step 1/1. Catalyzes the reversible transfer of the terminal phosphate group between ATP and AMP. Plays an important role in cellular energy homeostasis and in adenine nucleotide metabolism. The protein is Adenylate kinase of Leptospira biflexa serovar Patoc (strain Patoc 1 / Ames).